We begin with the raw amino-acid sequence, 1275 residues long: Membrane-associated guanylate kinase, WW and PDZ domain-containing protein 2 (1275 aa).

The PDZ 1 domain occupies 17–101; sequence ESVIGRNPEG…PLRLKCVKQG (85 aa). One can recognise a Guanylate kinase-like domain in the interval 109–283; that stretch reads RHYLNLRFQK…PVYSQPEELK (175 aa). The disordered stretch occupies residues 203-305; it reads LPGATPSAEG…ENEDSDPLPD (103 aa). The segment covering 280-295 has biased composition (basic and acidic residues); that stretch reads EELKDQMDDTKPTKPE. 2 WW domains span residues 301–334 and 347–380; these read DPLPDNWEMAYTEKGEVYFIDHNTKTTSWLDPRL and NELPYGWEKIDDPIYGTYYVDHINRRTQFENPVL. Residues 301-380 are interaction with DDN; the sequence is DPLPDNWEMA…RRTQFENPVL (80 aa). The residue at position 361 (Tyr361) is a Phosphotyrosine. PDZ domains lie at 425–509 and 604–682; these read STTL…CRGY and TLTI…HRGG. Residue Ser685 is modified to Phosphoserine. Residues 698-740 form a disordered region; that stretch reads ENQGSPQTSLSAPAVPQNLPFPPALHRSSFPDSTEAFDPRKPD. Residues 699 to 708 are compositionally biased toward polar residues; that stretch reads NQGSPQTSLS. Residues 777–859 form the PDZ 4 domain; it reads DVHLRRMESG…NGQVNLTVRR (83 aa). Residue Tyr826 is modified to Phosphotyrosine. The tract at residues 868–912 is disordered; sequence CPENGRSPGSVSTHHSSPRSDYATYSNSNHAAPSSNASPPEGFAS. A phosphoserine mark is found at Ser883 and Ser884. Positions 893–907 are enriched in low complexity; the sequence is SNSNHAAPSSNASPP. In terms of domain architecture, PDZ 5 spans 919 to 1009; the sequence is DVVIHRKENE…SVTLRIIPQE (91 aa). A compositionally biased stretch (polar residues) spans 1010–1040; it reads ELNSPTSAPSSEKQSPMAQQHSPLAQQSPLA. A disordered region spans residues 1010–1128; it reads ELNSPTSAPS…PDTRQYPLSD (119 aa). Ser1013 bears the Phosphoserine mark. A compositionally biased stretch (basic and acidic residues) spans 1067 to 1083; it reads NSYRSEVKARQDVKPDI. Residues 1139-1221 enclose the PDZ 6 domain; it reads TVDMEKGAKG…RVRLLLKRGT (83 aa).

Belongs to the MAGUK family. Interacts (via its WW domains) with DRPLA. Interacts (via its second PDZ domain) with PTEN (via unphosphorylated C-terminus); this interaction diminishes the degradation rate of PTEN. Interacts (via guanylate kinase domain) with DLGAP1. Interacts (via the PDZ domains) with GRIN2A, GRID2 and NLGN1. Interacts with CTNND2, CTNNB1 and MAGUIN-1. Interacts with ACVR2A, SMAD2 and SMAD3. Part of a complex consisting of MAGI2/ARIP1, ACVR2A, ACVR1B and SMAD3. May interact with HTR2A. Interacts with RAPGEF2. Identified in a complex with ACTN4, CASK, IQGAP1, NPHS1, SPTAN1 and SPTBN1. Interacts with DDN. Found in a complex, at least composed of KIDINS220, MAGI2, NTRK1 and RAPGEF2; the complex is mainly formed at late endosomes in a NGF-dependent manner. Interacts with RAPGEF2; the interaction occurs before or after nerve growth factor (NGF) stimulation. Interacts (via PDZ domain) with KIDINS220 (via C-terminal domain). Interacts with IGSF9 and HTR4. Interacts with DLL1. Found in a complex with IGSF9B and NLGN2; the interaction with IGSF9B is mediated via the PDZ 5 and PDZ 6 domains, while the interaction with NLGN2 is mediated via the WW1, WW2 and PDZ2 domains. Interacts (via PDZ 6 domain) with USH1G (via SAM domain); the interaction is triggered by phosphorylation of USH1G by CK2 and negatively regulates MAGI2-mediated endocytosis. In terms of tissue distribution, expressed throughout the retina except in the nuclear layers and the photoreceptor outer segments (at protein level). Highest retinal expression is observed in the outer plexiform layer, the outer limiting membrane and the inner segment of photoreceptor cells (at protein level). Expressed in brain.

It is found in the cytoplasm. It localises to the late endosome. The protein localises to the synapse. Its subcellular location is the synaptosome. The protein resides in the cell membrane. It is found in the cytoskeleton. It localises to the microtubule organizing center. The protein localises to the centrosome. Its subcellular location is the cell projection. The protein resides in the cilium. It is found in the centriole. It localises to the photoreceptor inner segment. The protein localises to the photoreceptor outer segment. Seems to act as a scaffold molecule at synaptic junctions by assembling neurotransmitter receptors and cell adhesion proteins. Plays a role in nerve growth factor (NGF)-induced recruitment of RAPGEF2 to late endosomes and neurite outgrowth. May play a role in regulating activin-mediated signaling in neuronal cells. Enhances the ability of PTEN to suppress AKT1 activation. Plays a role in receptor-mediated clathrin-dependent endocytosis which is required for ciliogenesis. The chain is Membrane-associated guanylate kinase, WW and PDZ domain-containing protein 2 (Magi2) from Mus musculus (Mouse).